The sequence spans 396 residues: NADH-quinone oxidoreductase subunit D (396 aa).

It belongs to the complex I 49 kDa subunit family. As to quaternary structure, NDH-1 is composed of 14 different subunits. Subunits NuoB, C, D, E, F, and G constitute the peripheral sector of the complex.

Its subcellular location is the cell inner membrane. The catalysed reaction is a quinone + NADH + 5 H(+)(in) = a quinol + NAD(+) + 4 H(+)(out). Its function is as follows. NDH-1 shuttles electrons from NADH, via FMN and iron-sulfur (Fe-S) centers, to quinones in the respiratory chain. The immediate electron acceptor for the enzyme in this species is believed to be ubiquinone. Couples the redox reaction to proton translocation (for every two electrons transferred, four hydrogen ions are translocated across the cytoplasmic membrane), and thus conserves the redox energy in a proton gradient. This chain is NADH-quinone oxidoreductase subunit D, found in Brucella suis biovar 1 (strain 1330).